The primary structure comprises 239 residues: Splicing factor U2AF 35 kDa subunit (239 aa).

At A2 the chain carries N-acetylalanine. The segment at 12–40 (EKDKVNCSFYFKIGACRHGDRCSRLHNKP) adopts a C3H1-type 1 zinc-finger fold. Position 39 is an N6-methyllysine (K39). Phosphoserine occurs at positions 61 and 145. Residues 65–147 (LRCAVSDVEM…QPIHAELSPV (83 aa)) enclose the RRM domain. A C3H1-type 2 zinc finger spans residues 149–176 (DFREACCRQYEMGECTRGGFCNFMHLKP). R165 bears the Omega-N-methylarginine mark. The disordered stretch occupies residues 183 to 239 (RELYGRRRKKHRSRSRSRERRSRSRDRGRGGGGGGGGGGGRERDRRRSRDRERSGRF). Basic residues predominate over residues 188 to 208 (RRRKKHRSRSRSRERRSRSRD). The segment covering 212 to 221 (GGGGGGGGGG) has biased composition (gly residues). Basic and acidic residues predominate over residues 222-239 (GRERDRRRSRDRERSGRF).

Belongs to the splicing factor SR family. As to quaternary structure, identified in the spliceosome C complex. Heterodimer with U2AF2. Interacts (via RS domain) with PHF5A (via N-terminus). Interacts with ZRANB2. Interacts with SDE2. Interacts with SF3B1. As to expression, expressed in primary spermatocytes and elongating spermatids (at protein level).

The protein localises to the nucleus. The protein resides in the nucleus speckle. Its function is as follows. Plays a critical role in both constitutive and enhancer-dependent splicing by mediating protein-protein interactions and protein-RNA interactions required for accurate 3'-splice site selection. Recruits U2 snRNP to the branch point. Directly mediates interactions between U2AF2 and proteins bound to the enhancers and thus may function as a bridge between U2AF2 and the enhancer complex to recruit it to the adjacent intron. This Mus musculus (Mouse) protein is Splicing factor U2AF 35 kDa subunit (U2af1).